Reading from the N-terminus, the 293-residue chain is Rhomboid-like protease 1 (293 aa).

The disordered stretch occupies residues E18 to A40. Helical transmembrane passes span V62–T82, L112–Q132, F148–F168, V174–T194, L217–L237, and A262–V282. Residue S177 is the Nucleophile of the active site. H232 is a catalytic residue.

Belongs to the peptidase S54 family.

It localises to the cytoplasmic vesicle. The protein resides in the secretory vesicle. Its subcellular location is the microneme membrane. The enzyme catalyses Cleaves type-1 transmembrane domains using a catalytic dyad composed of serine and histidine that are contributed by different transmembrane domains.. In terms of biological role, serine protease involved in intramembrane proteolysis and the subsequent release of polypeptides from their membrane anchors. Has no detectable activity towards MIC2. The polypeptide is Rhomboid-like protease 1 (ROM1) (Toxoplasma gondii).